The primary structure comprises 488 residues: Annexin A7 (488 aa).

Positions methionine 1–proline 18 are enriched in pro residues. Disordered stretches follow at residues methionine 1–valine 49 and glycine 71–serine 150. Positions methionine 1–proline 143 are repeat-rich region. Residues glycine 5–alanine 20 form a 3 X 5 AA tandem repeats of G-Y-P-P-X region. A compositionally biased stretch (gly residues) spans proline 89–phenylalanine 102. Annexin repeat units lie at residues phenylalanine 185–methionine 256, proline 257–glutamine 328, glutamine 340–glutamine 412, and asparagine 416–glycine 487. Residue lysine 233 is modified to N6-acetyllysine.

Belongs to the annexin family. In terms of assembly, interacts with PDCD6.

Its function is as follows. Calcium/phospholipid-binding protein which promotes membrane fusion and is involved in exocytosis. This Macaca fascicularis (Crab-eating macaque) protein is Annexin A7 (ANXA7).